Here is a 126-residue protein sequence, read N- to C-terminus: MIRTMLQGKLHRVKVTQADLHYEGSCAIDQDFLDAAGILENEAIDIWNVSNGKRFSTYAIAAERGSKIISVNGAAAHCASVGDIVIIASFVTMSDEEARTWHPNVAYFEGDNEMKRTAKAIPVQVA.

The active-site Schiff-base intermediate with substrate; via pyruvic acid is the Ser-25. Pyruvic acid (Ser) is present on Ser-25. Thr-57 serves as a coordination point for substrate. Residue Tyr-58 is the Proton donor of the active site. Gly-73–Ala-75 serves as a coordination point for substrate.

The protein belongs to the PanD family. Heterooctamer of four alpha and four beta subunits. Pyruvate is required as a cofactor. In terms of processing, is synthesized initially as an inactive proenzyme, which is activated by self-cleavage at a specific serine bond to produce a beta-subunit with a hydroxyl group at its C-terminus and an alpha-subunit with a pyruvoyl group at its N-terminus.

Its subcellular location is the cytoplasm. The enzyme catalyses L-aspartate + H(+) = beta-alanine + CO2. Its pathway is cofactor biosynthesis; (R)-pantothenate biosynthesis; beta-alanine from L-aspartate: step 1/1. Catalyzes the pyruvoyl-dependent decarboxylation of aspartate to produce beta-alanine. This is Aspartate 1-decarboxylase from Salmonella arizonae (strain ATCC BAA-731 / CDC346-86 / RSK2980).